A 90-amino-acid chain; its full sequence is DNA-directed RNA polymerase subunit omega (90 aa).

It belongs to the RNA polymerase subunit omega family. In terms of assembly, the RNAP catalytic core consists of 2 alpha, 1 beta, 1 beta' and 1 omega subunit. When a sigma factor is associated with the core the holoenzyme is formed, which can initiate transcription.

The enzyme catalyses RNA(n) + a ribonucleoside 5'-triphosphate = RNA(n+1) + diphosphate. Its function is as follows. Promotes RNA polymerase assembly. Latches the N- and C-terminal regions of the beta' subunit thereby facilitating its interaction with the beta and alpha subunits. This is DNA-directed RNA polymerase subunit omega from Histophilus somni (strain 129Pt) (Haemophilus somnus).